The following is a 94-amino-acid chain: Small ribosomal subunit protein uS19 (94 aa).

Belongs to the universal ribosomal protein uS19 family.

Protein S19 forms a complex with S13 that binds strongly to the 16S ribosomal RNA. This is Small ribosomal subunit protein uS19 from Natranaerobius thermophilus (strain ATCC BAA-1301 / DSM 18059 / JW/NM-WN-LF).